A 443-amino-acid polypeptide reads, in one-letter code: MKVLQEINLTYSILVIADFSSIFGCLLVLIAFKKLKLLRNHITRVIACFCVSSLLKDIISTGLTLSLGPQNEAGSTSFQCYLYAITITYGSLACWLWTLCLAFSIYNLIVKREPEPEKYEKFYHGVCWTIPLICVIVMLAKKTIEPVGNWCWISEKYVGYRFGLFYGPFFAIWIISAVLVGLTSRYTYSVIRNSVSDNKDKHMTYQFKLINYIIVFLLCWVFAIVNRILNGLGYYPTLPNILHTYFSVSHGFFASVTFIYNNPLMWRYWGSKIFLIFAKFGYFVELQRRLDRNKNNNNPSPILNSYAATVYHSSTIESLSLQHNNDISNDNQQQQQQQQTPQQPQQQFQQQQSPTVIEMQNLKQDQNIENNEQNENCYNTIDTNIEINTNKLNDNSFEITQPSNDLNTIENNNNYNNNNNNNNNNSLVIEKEKDEREKKDNKF.

Residues 1-11 (MKVLQEINLTY) are Extracellular-facing. Asn8 carries N-linked (GlcNAc...) asparagine glycosylation. A helical transmembrane segment spans residues 12 to 32 (SILVIADFSSIFGCLLVLIAF). The Cytoplasmic portion of the chain corresponds to 33-44 (KKLKLLRNHITR). The helical transmembrane segment at 45–65 (VIACFCVSSLLKDIISTGLTL) threads the bilayer. Residues 66–89 (SLGPQNEAGSTSFQCYLYAITITY) are Extracellular-facing. Residues 90 to 110 (GSLACWLWTLCLAFSIYNLIV) traverse the membrane as a helical segment. Residues 111–119 (KREPEPEKY) are Cytoplasmic-facing. A helical transmembrane segment spans residues 120 to 140 (EKFYHGVCWTIPLICVIVMLA). Over 141 to 161 (KKTIEPVGNWCWISEKYVGYR) the chain is Extracellular. A helical membrane pass occupies residues 162 to 182 (FGLFYGPFFAIWIISAVLVGL). Residues 183-208 (TSRYTYSVIRNSVSDNKDKHMTYQFK) lie on the Cytoplasmic side of the membrane. A helical transmembrane segment spans residues 209 to 229 (LINYIIVFLLCWVFAIVNRIL). At 230 to 263 (NGLGYYPTLPNILHTYFSVSHGFFASVTFIYNNP) the chain is on the extracellular side. A helical membrane pass occupies residues 264 to 284 (LMWRYWGSKIFLIFAKFGYFV). Over 285–443 (ELQRRLDRNK…DEREKKDNKF (159 aa)) the chain is Cytoplasmic. 2 disordered regions span residues 325–354 (NDIS…QQSP) and 396–443 (SFEI…DNKF). A compositionally biased stretch (low complexity) spans 332 to 352 (QQQQQQQQTPQQPQQQFQQQQ). Residues 396 to 410 (SFEITQPSNDLNTIE) show a composition bias toward polar residues. Residues 411-425 (NNNNYNNNNNNNNNN) are compositionally biased toward low complexity. A compositionally biased stretch (basic and acidic residues) spans 429–443 (IEKEKDEREKKDNKF).

The protein belongs to the G-protein coupled receptor 5 family. In terms of processing, C-terminal Ser or Thr residues may be phosphorylated.

It localises to the membrane. Receptor for cAMP. Regulates axial patterning and cellular differentiation during late development. The activity of this receptor is mediated by G proteins. In Dictyostelium discoideum (Social amoeba), this protein is Cyclic AMP receptor 4 (carD).